The following is a 358-amino-acid chain: Probable tartrate dehydrogenase/decarboxylase TtuC' (358 aa).

Asp-222, Asp-246, and Asp-250 together coordinate Mn(2+).

This sequence belongs to the isocitrate and isopropylmalate dehydrogenases family. The cofactor is Mg(2+). Mn(2+) serves as cofactor. It depends on K(+) as a cofactor.

Its subcellular location is the cytoplasm. The enzyme catalyses tartrate + NAD(+) = 2-hydroxy-3-oxosuccinate + NADH + H(+). It carries out the reaction (2R,3S)-tartrate + NAD(+) = 2-hydroxy-3-oxosuccinate + NADH + H(+). The catalysed reaction is (2R,3R)-tartrate + NAD(+) = 2-hydroxy-3-oxosuccinate + NADH + H(+). It catalyses the reaction (2R,3R)-tartrate + H(+) = (R)-glycerate + CO2. The enzyme catalyses (R)-malate + NAD(+) = pyruvate + CO2 + NADH. It participates in carbohydrate acid metabolism; tartrate degradation; 2-hydroxy-3-oxosuccinate from L-tartrate: step 1/1. The protein operates within carbohydrate acid metabolism; tartrate degradation; 2-hydroxy-3-oxosuccinate from meso-tartrate: step 1/1. Its pathway is carbohydrate acid metabolism; tartrate degradation; D-glycerate from L-tartrate: step 1/1. In terms of biological role, has multiple catalytic activities. Apart from catalyzing the oxidation of (+)-tartrate to oxaloglycolate, also converts meso-tartrate to D-glycerate and catalyzes the oxidative decarboxylation of D-malate to pyruvate. This Agrobacterium vitis (Rhizobium vitis) protein is Probable tartrate dehydrogenase/decarboxylase TtuC' (ttuC').